The sequence spans 202 residues: Syndecan-2 (202 aa).

The first 18 residues, 1–18 (MQRAWILLTLGLMACVSA), serve as a signal peptide directing secretion. The Extracellular portion of the chain corresponds to 19 to 145 (ETRTELTSDK…HSDNLFKRTE (127 aa)). Ser41, Ser55, and Ser57 each carry an O-linked (Xyl...) (glycosaminoglycan) serine glycan. Disordered regions lie at residues 41 to 63 (SGVY…DEDI) and 88 to 118 (ETMT…ISEA). The segment covering 91–103 (TLKTQSITPAQTE) has biased composition (polar residues). Residues 104 to 117 (SPEETDKEEVDISE) are compositionally biased toward acidic residues. Ser116 is modified (phosphoserine). Residues 146 to 170 (VLAAVIAGGVIGFLFAIFLILLLVY) traverse the membrane as a helical segment. The Cytoplasmic portion of the chain corresponds to 171–202 (RMRKKDEGSYDLGERKPSSAAYQKAPTKEFYA). The interval 179–202 (SYDLGERKPSSAAYQKAPTKEFYA) is disordered. Ser188 bears the Phosphoserine mark.

Belongs to the syndecan proteoglycan family. In terms of assembly, interacts (via cytoplasmic domain) with SARM1. Forms a complex with SDCBP and PDCD6IP. Post-translationally, O-glycosylated; contains both heparan sulfate and chondroitin sulfate. In terms of processing, phosphorylated on serine residues. In terms of tissue distribution, preferential expression in cells of mesenchymal origin.

It is found in the membrane. Its function is as follows. Cell surface proteoglycan which regulates dendritic arbor morphogenesis. The sequence is that of Syndecan-2 (Sdc2) from Mus musculus (Mouse).